A 518-amino-acid chain; its full sequence is Integrator complex subunit 14 (518 aa).

Residues 2 to 204 enclose the VWFA domain; that stretch reads PTVVVMDVSL…KNVQSMFGKL (203 aa). S10, S12, and T86 together coordinate Mg(2+). Residue K418 is modified to N6-acetyllysine.

Belongs to the Integrator subunit 14 family. As to quaternary structure, component of the Integrator complex, composed of core subunits INTS1, INTS2, INTS3, INTS4, INTS5, INTS6, INTS7, INTS8, INTS9/RC74, INTS10, INTS11/CPSF3L, INTS12, INTS13, INTS14 and INTS15. The core complex associates with protein phosphatase 2A subunits PPP2CA and PPP2R1A, to form the Integrator-PP2A (INTAC) complex. INTS14 is part of the tail subcomplex, composed of INTS10, INTS13, INTS14 and INTS15.

The protein resides in the nucleus. Component of the integrator complex, a multiprotein complex that terminates RNA polymerase II (Pol II) transcription in the promoter-proximal region of genes. The integrator complex provides a quality checkpoint during transcription elongation by driving premature transcription termination of transcripts that are unfavorably configured for transcriptional elongation: the complex terminates transcription by (1) catalyzing dephosphorylation of the C-terminal domain (CTD) of Pol II subunit POLR2A/RPB1 and SUPT5H/SPT5, (2) degrading the exiting nascent RNA transcript via endonuclease activity and (3) promoting the release of Pol II from bound DNA. The integrator complex is also involved in terminating the synthesis of non-coding Pol II transcripts, such as enhancer RNAs (eRNAs), small nuclear RNAs (snRNAs), telomerase RNAs and long non-coding RNAs (lncRNAs). Within the integrator complex, INTS14 is part of the integrator tail module that acts as a platform for the recruitment of transcription factors at promoters. In Bos taurus (Bovine), this protein is Integrator complex subunit 14.